A 164-amino-acid chain; its full sequence is Phosphopantetheine adenylyltransferase (164 aa).

It belongs to the eukaryotic CoaD family.

It localises to the cytoplasm. The enzyme catalyses (R)-4'-phosphopantetheine + ATP + H(+) = 3'-dephospho-CoA + diphosphate. The protein operates within cofactor biosynthesis; coenzyme A biosynthesis. Functionally, reversibly transfers an adenylyl group from ATP to 4'-phosphopantetheine, yielding dephospho-CoA (dPCoA) and pyrophosphate. In Methanothermobacter thermautotrophicus (strain ATCC 29096 / DSM 1053 / JCM 10044 / NBRC 100330 / Delta H) (Methanobacterium thermoautotrophicum), this protein is Phosphopantetheine adenylyltransferase.